A 294-amino-acid polypeptide reads, in one-letter code: Flavin-dependent thymidylate synthase (294 aa).

Residues G27–Y250 form the ThyX domain. FAD-binding positions include T73, R96–R98, and E104. DUMP-binding positions include Q93–R96, E104–R108, and R189. The ThyX motif signature appears at R96–S106. FAD is bound by residues N205–H207 and H211. DUMP is bound at residue R216. R216 (involved in ionization of N3 of dUMP, leading to its activation) is an active-site residue.

It belongs to the thymidylate synthase ThyX family. Homotetramer. It depends on FAD as a cofactor.

It catalyses the reaction dUMP + (6R)-5,10-methylene-5,6,7,8-tetrahydrofolate + NADPH + H(+) = dTMP + (6S)-5,6,7,8-tetrahydrofolate + NADP(+). The protein operates within pyrimidine metabolism; dTTP biosynthesis. Catalyzes the reductive methylation of 2'-deoxyuridine-5'-monophosphate (dUMP) to 2'-deoxythymidine-5'-monophosphate (dTMP) while utilizing 5,10-methylenetetrahydrofolate (mTHF) as the methyl donor, and NADPH and FADH(2) as the reductant. The polypeptide is Flavin-dependent thymidylate synthase (Rickettsia conorii (strain ATCC VR-613 / Malish 7)).